The chain runs to 585 residues: uncharacterized protein (585 aa).

The span at 1–18 (MSALSTKLEPTNSYSESL) shows a compositional bias: polar residues. The disordered stretch occupies residues 1-23 (MSALSTKLEPTNSYSESLPPQRR).

The protein belongs to the protein kinase superfamily. ADCK protein kinase family.

This is an uncharacterized protein from Synechocystis sp. (strain ATCC 27184 / PCC 6803 / Kazusa).